The following is a 133-amino-acid chain: UPF0102 protein ABSDF1354 (133 aa).

This sequence belongs to the UPF0102 family.

This Acinetobacter baumannii (strain SDF) protein is UPF0102 protein ABSDF1354.